The chain runs to 501 residues: Aldehyde dehydrogenase, cytosolic 1 (501 aa).

Position 246 to 251 (246 to 251 (GSTEVG)) interacts with NAD(+). The Proton acceptor role is filled by Glu-269. The active-site Nucleophile is Cys-303.

This sequence belongs to the aldehyde dehydrogenase family. As to quaternary structure, homotetramer. As to expression, eye specific, with very high expression in the lens.

The protein resides in the cytoplasm. It catalyses the reaction an aldehyde + NAD(+) + H2O = a carboxylate + NADH + 2 H(+). It functions in the pathway alcohol metabolism; ethanol degradation; acetate from ethanol: step 2/2. In terms of biological role, major component of the eye of elephant shrews, which in contrast to other mammals, possesses both a lens- and a non-lens class-1 aldehyde dehydrogenase 1. This eye-specific form is a structural protein of the lens and, in other part of the eye, serves as the major form of ALDH1. Can convert/oxidize retinaldehyde to retinoic acid. In Elephantulus edwardii (Cape long-eared elephant shrew), this protein is Aldehyde dehydrogenase, cytosolic 1 (ALDH1).